The sequence spans 71 residues: Small ribosomal subunit protein bS21 (71 aa).

Belongs to the bacterial ribosomal protein bS21 family.

The chain is Small ribosomal subunit protein bS21 from Buchnera aphidicola subsp. Cinara cedri (strain Cc).